The following is a 441-amino-acid chain: Protein kinase C and casein kinase substrate in neurons protein 1 (441 aa).

Ser-2 and Ser-76 each carry phosphoserine. Residues 10-280 (EEITDSFWEV…AIRGADAQED (271 aa)) form the F-BAR domain. The stretch at 23–272 (KRTVKRIDDG…HVYRELEQAI (250 aa)) forms a coiled coil. Thr-181 carries the phosphothreonine modification. A disordered region spans residues 310-380 (AAKKEKQPKK…ANGGANPFED (71 aa)). Residues 311–321 (AKKEKQPKKAE) are compositionally biased toward basic and acidic residues. The segment covering 326–348 (SNATGAVESTSQAGDRGSVSSYD) has biased composition (polar residues). 5 positions are modified to phosphoserine: Ser-343, Ser-345, Ser-346, Ser-358, and Ser-362. Positions 382–441 (AKGVRVRALYDYDGQEQDELSFKAGDELTKLGEEDEQGWCRGRLDSGQLGLYPANYVEAI) constitute an SH3 domain. A Phosphotyrosine modification is found at Tyr-391. A phosphoserine mark is found at Ser-402 and Ser-427.

The protein belongs to the PACSIN family. In terms of assembly, homodimer. May form heterooligomers with other PACSINs. Interacts with MAPT. Interacts with TRPV4. Interacts (via SH3 domain) with SYNJ1 and WASL. Interacts (via SH3 domain) with DNM1; the interaction is reduced by DNM1 phosphorylation. Interacts with DNM2 and DNM3. Interacts with both COBL and DBNL. Identified in a complex composed of COBL, PACSIN1 and WASL. Interacts with EHD1 and EHD3. Post-translationally, phosphorylated by casein kinase 2 (CK2) and protein kinase C (PKC). Highly expressed in brain (at protein level).

Its subcellular location is the cytoplasm. It is found in the cell projection. It localises to the synapse. The protein localises to the synaptosome. The protein resides in the ruffle membrane. Its subcellular location is the membrane. It is found in the cytoplasmic vesicle membrane. It localises to the cytosol. The protein localises to the cell membrane. Its function is as follows. Binds to membranes via its F-BAR domain and mediates membrane tubulation. Plays a role in the reorganization of the microtubule cytoskeleton via its interaction with MAPT; this decreases microtubule stability and inhibits MAPT-induced microtubule polymerization. Plays a role in cellular transport processes by recruiting DNM1, DNM2 and DNM3 to membranes. Plays a role in the reorganization of the actin cytoskeleton and in neuron morphogenesis via its interaction with COBL and WASL, and by recruiting COBL to the cell cortex. Plays a role in the regulation of neurite formation, neurite branching and the regulation of neurite length. Required for normal synaptic vesicle endocytosis; this process retrieves previously released neurotransmitters to accommodate multiple cycles of neurotransmission. Required for normal excitatory and inhibitory synaptic transmission. This Rattus norvegicus (Rat) protein is Protein kinase C and casein kinase substrate in neurons protein 1 (Pacsin1).